The chain runs to 129 residues: Large ribosomal subunit protein bL17 (129 aa).

The protein belongs to the bacterial ribosomal protein bL17 family. In terms of assembly, part of the 50S ribosomal subunit. Contacts protein L32.

The chain is Large ribosomal subunit protein bL17 from Pseudomonas aeruginosa (strain UCBPP-PA14).